We begin with the raw amino-acid sequence, 314 residues long: MHAYLHCLSHSPLVGYVDPAQEVLDEVNGVIASARERIAAFSPELVVLFAPDHYNGFFYDVMPPFCLGVGATAIGDFGSAAGELPVPVELAEACAHAVMKSGIDLAVSYCMQVDHGFAQPLEFLLGGLYKVPVLPVFINGVATPLPGFQRTRMLGEAIGRFTSTLNKRVLFLGSGGLSHQPPVPELAKADAHMRDRLLGSGKDLPASERELRQQRVISAAEKFVEDQRTLHPLNPIWDNQFMTLLEQGRIQELDAVSNEELSAIAGKSTHEIKTWVAAFAAISTFGNWRSEGRYYRPIPEWIAGFGSLSARTEN.

The active-site Proton donor is the His-115. The Proton acceptor role is filled by His-179.

Belongs to the LigB/MhpB extradiol dioxygenase family. Homotetramer. Fe(2+) is required as a cofactor.

It carries out the reaction 3-(2,3-dihydroxyphenyl)propanoate + O2 = (2Z,4E)-2-hydroxy-6-oxonona-2,4-dienedioate + H(+). The enzyme catalyses (2E)-3-(2,3-dihydroxyphenyl)prop-2-enoate + O2 = (2Z,4E,7E)-2-hydroxy-6-oxonona-2,4,7-trienedioate + H(+). Its pathway is aromatic compound metabolism; 3-phenylpropanoate degradation. In terms of biological role, catalyzes the non-heme iron(II)-dependent oxidative cleavage of 2,3-dihydroxyphenylpropionic acid and 2,3-dihydroxicinnamic acid into 2-hydroxy-6-ketononadienedioate and 2-hydroxy-6-ketononatrienedioate, respectively. This Escherichia coli (strain 55989 / EAEC) protein is 2,3-dihydroxyphenylpropionate/2,3-dihydroxicinnamic acid 1,2-dioxygenase.